We begin with the raw amino-acid sequence, 840 residues long: Probable inorganic carbon transporter subunit DabA 2 (840 aa).

Zn(2+) is bound by residues Cys-356, Asp-358, His-540, and Cys-555.

The protein belongs to the inorganic carbon transporter (TC 9.A.2) DabA family. Forms a complex with DabB. Zn(2+) serves as cofactor.

The protein localises to the cell inner membrane. In terms of biological role, part of an energy-coupled inorganic carbon pump. The polypeptide is Probable inorganic carbon transporter subunit DabA 2 (Bradyrhizobium sp. (strain ORS 278)).